The primary structure comprises 163 residues: K88 minor fimbrial subunit FaeF (163 aa).

Residues 1 to 22 (MKKTMMAAALVLSALSIQSALA) form the signal peptide.

The protein resides in the fimbrium. Functionally, K88 minor fimbrial subunit, plays an essential role in the biogenesis of the K88 fimbriae. required at some step in the initiation and/or elongation of the K88 fimbriae. The sequence is that of K88 minor fimbrial subunit FaeF (faeF) from Escherichia coli.